We begin with the raw amino-acid sequence, 134 residues long: Submaxillary gland androgen-regulated protein 3A (134 aa).

Residues 1–22 form the signal peptide; sequence MKSLTWILGLWALAACFTPGES. The tract at residues 19–134 is disordered; that stretch reads PGESQRGPRG…TDPALPTPAP (116 aa). 3 stretches are compositionally biased toward pro residues: residues 28–43, 50–85, and 94–119; these read GPYP…PPCF, VPPP…PPYG, and LPPP…PPFF.

The protein belongs to the PROL1/PROL3 family.

It localises to the secreted. In terms of biological role, may play a role in protection or detoxification. This is Submaxillary gland androgen-regulated protein 3A (SMR3A) from Homo sapiens (Human).